Consider the following 98-residue polypeptide: Putative pterin-4-alpha-carbinolamine dehydratase (98 aa).

Belongs to the pterin-4-alpha-carbinolamine dehydratase family.

The enzyme catalyses (4aS,6R)-4a-hydroxy-L-erythro-5,6,7,8-tetrahydrobiopterin = (6R)-L-erythro-6,7-dihydrobiopterin + H2O. The chain is Putative pterin-4-alpha-carbinolamine dehydratase from Jannaschia sp. (strain CCS1).